We begin with the raw amino-acid sequence, 247 residues long: MPLLFHPAWPLLLGATLTFRALRRVLCRLPQPAHVQTDPLRTWRWHNLLVSFTHSIVSGIWALLCLWQTPEMLVEIETAWSASGYLLVCFSAGYFIHDTVDIVVSKQTRASWEYLVHHVMAMGAFFSGIFWKRFVGGGVLTLLVEVSNIFLTLRMMMKINNAQDLLLYKVNKYINLVMYFLFRLAPQAYLTKFFLQYAGQRTLGTFLLAILLMLDLMIIIYFSRLLRSDFCPERAPRRQQKDKFLTE.

A signal peptide spans methionine 1–cysteine 27. The Extracellular segment spans residues arginine 28 to histidine 46. Residues leucine 40–arginine 234 enclose the TLC domain. A helical membrane pass occupies residues asparagine 47 to tryptophan 67. Topologically, residues glutamine 68 to serine 83 are cytoplasmic. The helical transmembrane segment at glycine 84 to valine 104 threads the bilayer. At serine 105–glycine 123 the chain is on the extracellular side. An intramembrane region (helical) is located at residues alanine 124–valine 144. The Extracellular portion of the chain corresponds to glutamate 145 to tyrosine 173. Residues isoleucine 174–phenylalanine 194 traverse the membrane as a helical segment. At leucine 195–arginine 201 the chain is on the cytoplasmic side. Residues threonine 202–phenylalanine 222 traverse the membrane as a helical segment. Over serine 223–glutamate 247 the chain is Extracellular.

It is found in the cell membrane. In terms of biological role, regulates the composition and fluidity of the plasma membrane. Inhibits the incorporation of membrane-fluidizing phospholipids containing omega-3 long-chain polyunsaturated fatty acids (LCPUFA) and thereby promotes membrane rigidity. Does not appear to have any effect on LCPUFA synthesis. The chain is TLC domain-containing protein 1 (Tlcd1) from Mus musculus (Mouse).